The sequence spans 353 residues: Protein RecA (353 aa).

Gly64–Thr71 lines the ATP pocket. A disordered region spans residues Leu331–Glu353. Residues Ser335–Lys346 show a composition bias toward basic and acidic residues.

This sequence belongs to the RecA family.

The protein resides in the cytoplasm. Can catalyze the hydrolysis of ATP in the presence of single-stranded DNA, the ATP-dependent uptake of single-stranded DNA by duplex DNA, and the ATP-dependent hybridization of homologous single-stranded DNAs. It interacts with LexA causing its activation and leading to its autocatalytic cleavage. This Macrococcus caseolyticus (strain JCSC5402) (Macrococcoides caseolyticum) protein is Protein RecA.